A 451-amino-acid chain; its full sequence is Tubulin gamma-1 chain (451 aa).

At Ser131 the chain carries Phosphoserine; by BRSK1. Residue 142–148 (AGGTGSG) participates in GTP binding.

Belongs to the tubulin family. As to quaternary structure, component of the gamma-tubulin ring complex (gTuRC) consisting of TUBGCP2, TUBGCP3, TUBGCP4, TUBGCP5 and TUBGCP6 and gamma-tubulin TUBG1 or TUBG2. TUBGCP2, TUBGCP3, TUBGCP4, TUBGCP5 and TUBGCP6 assemble in a 5:5:2:1:1 stoichiometry; each is associated with a gamma-tubulin, thereby arranging 14 gamma-tubulins in a helical manner. Gamma-tubulin at the first position is blocked by TUBGCP3 at the last position, allowing 13 protafilaments to grow into a microtubule. The gTuRC (via TUBGCP3 and TUBGCP6) interacts with ACTB and MZT1; the interactions form a luminal bridge that stabilizes the initial structure during complex assembly. The gTuRC (via TUBGCP2) interacts with MZT2A/MZT2B and CDK5RAP2 (via CM1 motif); the interactions play a role in gTuRC activation. Interacts with alpha-beta tubulin heterodimers; the interaction allows microtubules to nucleate from the gTuRC. Interacts with B9D2. Interacts with CDK5RAP2; the interaction is leading to centrosomal localization of TUBG1 and CDK5RAP2. Interacts with CIMAP3. Interacts with SAS6 and NUP62 at the centrosome. Interacts with EML3 (phosphorylated at 'Thr-881') and HAUS8. Interacts with DNM2; this interaction may participate in centrosome cohesion. Interacts with CCDC66. In terms of processing, phosphorylation at Ser-131 by BRSK1 regulates centrosome duplication, possibly by mediating relocation of gamma-tubulin and its associated proteins from the cytoplasm to the centrosome.

Its subcellular location is the cytoplasm. It localises to the cytoskeleton. The protein resides in the microtubule organizing center. The protein localises to the centrosome. It is found in the spindle. Tubulin is the major constituent of microtubules, protein filaments consisting of alpha- and beta-tubulin heterodimers. Gamma-tubulin is a key component of the gamma-tubulin ring complex (gTuRC) which mediates microtubule nucleation. The gTuRC regulates the minus-end nucleation of alpha-beta tubulin heterodimers that grow into microtubule protafilaments, a critical step in centrosome duplication and spindle formation. This is Tubulin gamma-1 chain from Mus musculus (Mouse).